A 374-amino-acid chain; its full sequence is Tomoregulin-2 (374 aa).

Residues 1–40 (MVLWESPRQCSSWTLCEGFCWLLLLPVMLLIVARPVKLAA) form the signal peptide. The Extracellular portion of the chain corresponds to 41–320 (FPTSLSDCQT…VPGPVRFQYV (280 aa)). Kazal-like domains lie at 90-137 (VCQF…SCAT) and 181-229 (VCNI…RCQD). Intrachain disulfides connect Cys91–Cys121, Cys95–Cys114, Cys103–Cys135, Cys182–Cys213, Cys186–Cys206, and Cys195–Cys227. A glycan (N-linked (GlcNAc...) (complex) asparagine; atypical) is linked at Asn204. Residue Asn230 is glycosylated (N-linked (GlcNAc...) asparagine). The EGF-like domain maps to 261-301 (HHIPCPEHYNGFCMHGKCEHSINMQEPSCRCDAGYTGQHCE). Intrachain disulfides connect Cys265/Cys278, Cys273/Cys289, and Cys291/Cys300. The required for shedding stretch occupies residues 303 to 320 (KDYSVLYVVPGPVRFQYV). The chain crosses the membrane as a helical span at residues 321-341 (LIAAVIGTIQIAVICVVVLCI). Over 342–374 (TRKCPRSNRIHRQKQNTGHYSSDNTTRASTRLI) the chain is Cytoplasmic. Positions 353–374 (RQKQNTGHYSSDNTTRASTRLI) are disordered. Residues 356-374 (QNTGHYSSDNTTRASTRLI) show a composition bias toward polar residues.

Belongs to the tomoregulin family. O-glycosylated; contains chondroitin sulfate glycosaminoglycans. In terms of processing, a soluble form (TMEFF2-ECD) is produced by proteolytic shedding. This shedding can be induced by phorbol ester or pro-inflammatory cytokines such as TNFalpha, and is mediated by ADAM17. In terms of tissue distribution, highly expressed in adult and fetal brain, spinal cord and prostate. Expressed in all brain regions except the pituitary gland, with highest levels in amygdala and corpus callosum. Expressed in the pericryptal myofibroblasts and other stromal cells of normal colonic mucosa. Expressed in prostate carcinoma. Down-regulated in colorectal cancer. Present in Alzheimer disease plaques (at protein level). Isoform 3 is expressed weakly in testis and at high levels in normal and cancerous prostate.

The protein resides in the membrane. It is found in the secreted. May be a survival factor for hippocampal and mesencephalic neurons. The shedded form up-regulates cancer cell proliferation, probably by promoting ERK1/2 phosphorylation. The sequence is that of Tomoregulin-2 (TMEFF2) from Homo sapiens (Human).